The following is a 738-amino-acid chain: Alanine--tRNA ligase (738 aa).

4 residues coordinate Zn(2+): H564, H568, C666, and H670.

Belongs to the class-II aminoacyl-tRNA synthetase family. Homotetramer. It depends on Zn(2+) as a cofactor.

It localises to the cytoplasm. The enzyme catalyses tRNA(Ala) + L-alanine + ATP = L-alanyl-tRNA(Ala) + AMP + diphosphate. In terms of biological role, catalyzes the attachment of alanine to tRNA(Ala) in a two-step reaction: alanine is first activated by ATP to form Ala-AMP and then transferred to the acceptor end of tRNA(Ala). Also edits incorrectly charged Ser-tRNA(Ala) and Gly-tRNA(Ala) via its editing domain. The chain is Alanine--tRNA ligase (alaS) from Yersinia pestis bv. Antiqua (strain Antiqua).